A 607-amino-acid polypeptide reads, in one-letter code: Probable CoA ligase CCL8 (607 aa).

ATP-binding positions include 236 to 244, 391 to 396, Asp474, 486 to 489, and Lys591; these read TSGTTGKPK, ERYGMT, and ILGR. Positions 305 to 391 are SBD1; the sequence is SVRGIWQRWR…QTITGHRLLE (87 aa). Residues 392–453 form an SBD2 region; sequence RYGMTEFVMA…VRSPSLFKEY (62 aa).

It belongs to the ATP-dependent AMP-binding enzyme family. In terms of tissue distribution, mostly expressed at low levels in glandular trichomes (lupulin glands) after flowering, and, to a lower extent, in stems, leaves, flowers and cones.

It localises to the cytoplasm. It is found in the cytosol. The chain is Probable CoA ligase CCL8 from Humulus lupulus (European hop).